Reading from the N-terminus, the 451-residue chain is Bifunctional protein GlmU (451 aa).

A pyrophosphorylase region spans residues 1–236 (MDQTPSYSPP…YEELRGINSK (236 aa)). UDP-N-acetyl-alpha-D-glucosamine is bound by residues 17–20 (LAAG), Lys31, Gln79, 84–85 (GT), 105–107 (YGD), Gly144, Glu162, Asn177, and Asn234. Asp107 contacts Mg(2+). Asn234 serves as a coordination point for Mg(2+). Residues 237-257 (VELAEAEATVQIVLRRKALEN) are linker. Positions 258–451 (GVTMTAPETV…EIRRQLKGSV (194 aa)) are N-acetyltransferase. Positions 323 and 341 each coordinate UDP-N-acetyl-alpha-D-glucosamine. His353 serves as the catalytic Proton acceptor. UDP-N-acetyl-alpha-D-glucosamine contacts are provided by Tyr356 and Asn367. Residues Ala370, 376 to 377 (NY), Ser395, Ala413, and Arg430 contribute to the acetyl-CoA site.

This sequence in the N-terminal section; belongs to the N-acetylglucosamine-1-phosphate uridyltransferase family. It in the C-terminal section; belongs to the transferase hexapeptide repeat family. Homotrimer. Requires Mg(2+) as cofactor.

It localises to the cytoplasm. The catalysed reaction is alpha-D-glucosamine 1-phosphate + acetyl-CoA = N-acetyl-alpha-D-glucosamine 1-phosphate + CoA + H(+). It catalyses the reaction N-acetyl-alpha-D-glucosamine 1-phosphate + UTP + H(+) = UDP-N-acetyl-alpha-D-glucosamine + diphosphate. It participates in nucleotide-sugar biosynthesis; UDP-N-acetyl-alpha-D-glucosamine biosynthesis; N-acetyl-alpha-D-glucosamine 1-phosphate from alpha-D-glucosamine 6-phosphate (route II): step 2/2. Its pathway is nucleotide-sugar biosynthesis; UDP-N-acetyl-alpha-D-glucosamine biosynthesis; UDP-N-acetyl-alpha-D-glucosamine from N-acetyl-alpha-D-glucosamine 1-phosphate: step 1/1. The protein operates within bacterial outer membrane biogenesis; LPS lipid A biosynthesis. Functionally, catalyzes the last two sequential reactions in the de novo biosynthetic pathway for UDP-N-acetylglucosamine (UDP-GlcNAc). The C-terminal domain catalyzes the transfer of acetyl group from acetyl coenzyme A to glucosamine-1-phosphate (GlcN-1-P) to produce N-acetylglucosamine-1-phosphate (GlcNAc-1-P), which is converted into UDP-GlcNAc by the transfer of uridine 5-monophosphate (from uridine 5-triphosphate), a reaction catalyzed by the N-terminal domain. The polypeptide is Bifunctional protein GlmU (Granulibacter bethesdensis (strain ATCC BAA-1260 / CGDNIH1)).